The primary structure comprises 175 residues: Ribosome maturation factor RimM (175 aa).

The 73-residue stretch at 94–166 (SDSWYEHELI…FIRLVPPGGL (73 aa)) folds into the PRC barrel domain.

Belongs to the RimM family. In terms of assembly, binds ribosomal protein uS19.

The protein localises to the cytoplasm. Functionally, an accessory protein needed during the final step in the assembly of 30S ribosomal subunit, possibly for assembly of the head region. Essential for efficient processing of 16S rRNA. May be needed both before and after RbfA during the maturation of 16S rRNA. It has affinity for free ribosomal 30S subunits but not for 70S ribosomes. This is Ribosome maturation factor RimM from Renibacterium salmoninarum (strain ATCC 33209 / DSM 20767 / JCM 11484 / NBRC 15589 / NCIMB 2235).